The primary structure comprises 297 residues: F-box only protein 2 (297 aa).

A disordered region spans residues 1–42 (MDGDGDPESVGQPEEASPEEQQEEACAEEANGGEERPEDDGE). Residues 16 to 27 (ASPEEQQEEACA) are compositionally biased toward acidic residues. The region spanning 45 to 92 (AAYLDELPEPLLLRVLAELPAAQLVQACRLVCLRWKELVDGAPLWLLK) is the F-box domain. The FBA domain occupies 114–297 (FYFLSKRRRN…VTNSSVWVEP (184 aa)). Residues 211–213 (RRD) and 279–280 (YW) each bind a carbohydrate.

In terms of assembly, component of the SCF(FBXO2) complex consisting of CUL1, RBX1, SKP1 and FBXO2. Predominantly detected as heterodimer with SKP1; the heterodimer with SKP1 is not part of the SCF(FBXO2) complex.

Its subcellular location is the cytoplasm. The protein localises to the microsome membrane. It participates in protein modification; protein ubiquitination. Functionally, substrate recognition component of a SCF (SKP1-CUL1-F-box protein) E3 ubiquitin-protein ligase complex that mediates the ubiquitination and subsequent proteasomal degradation of target proteins. Involved in the endoplasmic reticulum-associated degradation pathway (ERAD) for misfolded lumenal proteins by recognizing and binding sugar chains on unfolded glycoproteins that are retrotranslocated into the cytosol and promoting their ubiquitination and subsequent degradation. Prevents formation of cytosolic aggregates of unfolded glycoproteins that have been retrotranslocated into the cytosol. Able to recognize and bind denatured glycoproteins, preferentially those of the high-mannose type. The protein is F-box only protein 2 (FBXO2) of Bos taurus (Bovine).